Consider the following 874-residue polypeptide: Alanine--tRNA ligase (874 aa).

H562, H566, C664, and H668 together coordinate Zn(2+).

It belongs to the class-II aminoacyl-tRNA synthetase family. It depends on Zn(2+) as a cofactor.

The protein resides in the cytoplasm. The enzyme catalyses tRNA(Ala) + L-alanine + ATP = L-alanyl-tRNA(Ala) + AMP + diphosphate. Functionally, catalyzes the attachment of alanine to tRNA(Ala) in a two-step reaction: alanine is first activated by ATP to form Ala-AMP and then transferred to the acceptor end of tRNA(Ala). Also edits incorrectly charged Ser-tRNA(Ala) and Gly-tRNA(Ala) via its editing domain. The sequence is that of Alanine--tRNA ligase from Shewanella sediminis (strain HAW-EB3).